The primary structure comprises 175 residues: Ribosome maturation factor RimP (175 aa).

The tract at residues 152 to 175 (EFNRPTDGPGDDGDDGGDDEAGEA) is disordered. The segment covering 160–175 (PGDDGDDGGDDEAGEA) has biased composition (acidic residues).

This sequence belongs to the RimP family.

The protein resides in the cytoplasm. In terms of biological role, required for maturation of 30S ribosomal subunits. The sequence is that of Ribosome maturation factor RimP from Nocardioides sp. (strain ATCC BAA-499 / JS614).